The chain runs to 481 residues: 2-succinylbenzoate--CoA ligase (481 aa).

It belongs to the ATP-dependent AMP-binding enzyme family. MenE subfamily.

It carries out the reaction 2-succinylbenzoate + ATP + CoA = 2-succinylbenzoyl-CoA + AMP + diphosphate. The protein operates within quinol/quinone metabolism; 1,4-dihydroxy-2-naphthoate biosynthesis; 1,4-dihydroxy-2-naphthoate from chorismate: step 5/7. It functions in the pathway quinol/quinone metabolism; menaquinone biosynthesis. Its function is as follows. Converts 2-succinylbenzoate (OSB) to 2-succinylbenzoyl-CoA (OSB-CoA). The protein is 2-succinylbenzoate--CoA ligase of Bacillus cereus (strain Q1).